Here is a 413-residue protein sequence, read N- to C-terminus: Divalent metal cation transporter MntH (413 aa).

The next 11 helical transmembrane spans lie at 19 to 39 (FALM…GNFA), 49 to 69 (GYQL…IQLM), 94 to 114 (VWFY…AEFI), 122 to 142 (LVFG…TFLI), 155 to 175 (LVIG…LFFS), 196 to 216 (AVLL…IYLH), 240 to 260 (VAIA…TAAA), 287 to 307 (AAAL…TVVG), 323 to 343 (IPLL…ILAG), 349 to 369 (ILVM…IPLL), and 393 to 413 (LIVV…ALNL).

It belongs to the NRAMP family.

The protein resides in the cell inner membrane. In terms of biological role, h(+)-stimulated, divalent metal cation uptake system. The chain is Divalent metal cation transporter MntH from Erwinia tasmaniensis (strain DSM 17950 / CFBP 7177 / CIP 109463 / NCPPB 4357 / Et1/99).